The primary structure comprises 58 residues: Sperm protamine P1 (58 aa).

The disordered stretch occupies residues Met-1–Arg-58.

This sequence belongs to the protamine P1 family. Testis.

The protein resides in the nucleus. The protein localises to the chromosome. Protamines substitute for histones in the chromatin of sperm during the haploid phase of spermatogenesis. They compact sperm DNA into a highly condensed, stable and inactive complex. The polypeptide is Sperm protamine P1 (PRM1) (Monodelphis domestica (Gray short-tailed opossum)).